The following is a 2731-amino-acid chain: Teneurin-m (2731 aa).

2 disordered regions span residues 1 to 60 (MNPY…QNQQ) and 103 to 136 (LLEG…NNPN). The Cytoplasmic portion of the chain corresponds to 1–229 (MNPYEYESTL…RKDLVARCSS (229 aa)). Over residues 110 to 119 (TAPPDVPPRN) the composition is skewed to pro residues. Polar residues predominate over residues 120-136 (PTMSRMQNGRLTVNNPN). A helical transmembrane segment spans residues 230–250 (PWFGIGSISVLFAFVVMLILL). At 251–2731 (TTTGVIKWNQ…RQLKFGELSA (2481 aa)) the chain is on the extracellular side. The interval 321-387 (SSAATVTTAT…RTFPARSFPP (67 aa)) is disordered. Positions 322–370 (SAATVTTATSNSGTAQGLQSTSASAEATSSAATSSSQSSLTPSLSSSLA) are enriched in low complexity. EGF-like domains are found at residues 536–572 (GGDD…KECS), 574–606 (RHDE…KFCE), 643–676 (DALQ…DDCS), and 738–774 (TIEG…PDCG). Disulfide bonds link Cys-540–Cys-549, Cys-545–Cys-560, Cys-562–Cys-571, Cys-578–Cys-589, Cys-583–Cys-594, Cys-596–Cys-605, Cys-651–Cys-664, Cys-666–Cys-675, Cys-742–Cys-752, Cys-746–Cys-762, and Cys-764–Cys-773. N-linked (GlcNAc...) asparagine glycosylation occurs at Asn-857. NHL repeat units follow at residues 1160 to 1201 (ECPD…IMTD), 1202 to 1246 (GSIR…VRDT), 1391 to 1434 (STAY…VRVI), and 1459 to 1502 (CFEA…VMSS). A YD repeat occupies 1618-1652 (TGLLRTKLDSTGRSYVYNYDEFGRLTSAVTPTGRV). Residues 2691–2731 (LADDPGNVAFQRDAKRKRRKTGSSHRSASNRRQLKFGELSA) are disordered. Residues 2704-2724 (AKRKRRKTGSSHRSASNRRQL) are compositionally biased toward basic residues.

The protein belongs to the tenascin family. Teneurin subfamily. In terms of assembly, homodimer. Heterodimer with Ten-a. Interacts with Ten-a; the interaction occurs at the neuromuscular junction. Interacts with alpha-Spec and cher. Post-translationally, phosphorylated. Phosphorylation occurs at tyrosine residues. In terms of processing, proteolytically cleaved. Expressed in muscles and motor neurons (at protein level).

It localises to the cytoplasm. The protein resides in the postsynaptic cell membrane. Its subcellular location is the synapse. It is found in the synaptosome. The protein localises to the membrane. Its function is as follows. Involved in neural development, regulating the establishment of proper connectivity within the nervous system. Acts as a homophilic and heterophilic synaptic cell adhesion molecule that drives synapse assembly. Promotes bi-directional trans-synaptic signaling with Ten-a to organize neuromuscular synapses. Functions in olfactory synaptic partner matching by promoting homophilic cell adhesion between pre-synaptic olfactory receptor neurons (ORN) axons and post-synaptic projection neurons (PN) dendrites partner in the developing antennal lobe to form stable connections. Also required for peripheral axon growth cone guidance and target recognition of motor neurons. The polypeptide is Teneurin-m (Ten-m) (Drosophila melanogaster (Fruit fly)).